Here is a 161-residue protein sequence, read N- to C-terminus: MORN repeat-containing protein 5 (161 aa).

3 MORN repeats span residues 8–30 (YIGE…TETI), 31–53 (YVGE…SGSQ), and 54–75 (YDAI…DGLH).

As to expression, expressed in sperm (at protein level).

Its subcellular location is the cell projection. The protein localises to the cilium. It is found in the flagellum. The polypeptide is MORN repeat-containing protein 5 (MORN5) (Homo sapiens (Human)).